The sequence spans 356 residues: MTERRIIHIDMDYFFAQVEMRDNPKLKGKPVIVGGKAIHRGVVSTASYEARAYGVHSAMPMTQAHKLCPNGYYVTSRFDTYREVSGQIMKIFRSYTELVEPMSLDEAYLDITHLVRPDLPASTIANYIRRDIYEVTRLTASAGVSYNKFLAKLASGMNKPNGLTVIDYNNVHEILMQLDIGDFPGVGKASKKKMHQHHIYTGQDLYNKDEFELIRLFGKRGRGLYNKARGIDHNEVKASRVRKSVGTERTFSTDVNDDDVILRKIRELSGKTAERLNKIQKSGKTVTVKIKTYQYETISKQKSLRDPIRTETDIYNIAYTLYNDLKDPEIPIRLIGVTVGSLEQSDFKNLTIYDFI.

Residues 6–187 enclose the UmuC domain; it reads IIHIDMDYFF…LDIGDFPGVG (182 aa). Residues aspartate 10 and aspartate 105 each coordinate Mg(2+). Residue glutamate 106 is part of the active site.

The protein belongs to the DNA polymerase type-Y family. As to quaternary structure, monomer. Requires Mg(2+) as cofactor.

The protein localises to the cytoplasm. The catalysed reaction is DNA(n) + a 2'-deoxyribonucleoside 5'-triphosphate = DNA(n+1) + diphosphate. Functionally, poorly processive, error-prone DNA polymerase involved in untargeted mutagenesis. Copies undamaged DNA at stalled replication forks, which arise in vivo from mismatched or misaligned primer ends. These misaligned primers can be extended by PolIV. Exhibits no 3'-5' exonuclease (proofreading) activity. May be involved in translesional synthesis, in conjunction with the beta clamp from PolIII. This Staphylococcus epidermidis (strain ATCC 35984 / DSM 28319 / BCRC 17069 / CCUG 31568 / BM 3577 / RP62A) protein is DNA polymerase IV.